The primary structure comprises 468 residues: Putative amidase AmiC (468 aa).

Residues Lys-80 and Ser-155 each act as charge relay system in the active site. Residue Ser-179 is the Acyl-ester intermediate of the active site.

The protein belongs to the amidase family.

It carries out the reaction a monocarboxylic acid amide + H2O = a monocarboxylate + NH4(+). This chain is Putative amidase AmiC (amiC), found in Mycobacterium leprae (strain TN).